The primary structure comprises 644 residues: L-aspartate oxidase 2-a, chloroplastic (644 aa).

Residues 94–97 (SGIA), Lys-116, 123–130 (NTNYAQGG), and Asp-294 each bind FAD. Residue Arg-369 is the Proton donor/acceptor of the active site. FAD contacts are provided by residues Glu-454 and 470 to 471 (SL).

It belongs to the FAD-dependent oxidoreductase 2 family. NadB subfamily. FAD serves as cofactor.

The protein localises to the plastid. The protein resides in the chloroplast. It catalyses the reaction L-aspartate + O2 = iminosuccinate + H2O2. It participates in alkaloid biosynthesis; nicotine biosynthesis. The protein operates within cofactor biosynthesis; NAD(+) biosynthesis; iminoaspartate from L-aspartate (oxidase route): step 1/1. Functionally, involved in the biosynthesis of pyridine alkaloid natural products, leading mainly to the production of anabasine, anatabine, nicotine and nornicotine, effective deterrents against herbivores with antiparasitic and pesticide properties (neurotoxins); nornicotine serves as the precursor in the synthesis of the carcinogen compound N'-nitrosonornicotine (NNN). Catalyzes the oxidation of L-aspartate to iminoaspartate. This Nicotiana tabacum (Common tobacco) protein is L-aspartate oxidase 2-a, chloroplastic.